Here is a 438-residue protein sequence, read N- to C-terminus: Probable chaperone protein ClpB 1 (438 aa).

A coiled-coil region spans residues 1 to 94; sequence MNTADTRQRL…NNRKIEARQA (94 aa). The interval 1–118 is linker; it reads MNTADTRQRL…IADIVSRWTG (118 aa). The tract at residues 128 to 345 is NBD2; it reads ERQKLLGIES…RIDEVILFTP (218 aa). 178-185 lines the ATP pocket; it reads GPTGVGKT. The interval 346-438 is C-terminal; sequence LTRENLREIV…ENDAIVMKKK (93 aa).

Belongs to the ClpA/ClpB family. Homohexamer. The oligomerization is ATP-dependent.

Its subcellular location is the cytoplasm. Its function is as follows. Part of a stress-induced multi-chaperone system, it is involved in the recovery of the cell from heat-induced damage, in cooperation with DnaK, DnaJ and GrpE. Acts before DnaK, in the processing of protein aggregates. Protein binding stimulates the ATPase activity; ATP hydrolysis unfolds the denatured protein aggregates, which probably helps expose new hydrophobic binding sites on the surface of ClpB-bound aggregates, contributing to the solubilization and refolding of denatured protein aggregates by DnaK. This is Probable chaperone protein ClpB 1 (clpB1) from Chlorobaculum tepidum (strain ATCC 49652 / DSM 12025 / NBRC 103806 / TLS) (Chlorobium tepidum).